The primary structure comprises 57 residues: Ribosome modulation factor 2 (57 aa).

The segment at Met1–Lys24 is disordered.

It belongs to the ribosome modulation factor family.

The protein localises to the cytoplasm. In terms of biological role, during stationary phase, converts 70S ribosomes to an inactive dimeric form (100S ribosomes). The polypeptide is Ribosome modulation factor 2 (Colwellia psychrerythraea (strain 34H / ATCC BAA-681) (Vibrio psychroerythus)).